The primary structure comprises 49 residues: Large ribosomal subunit protein bL33A (49 aa).

Belongs to the bacterial ribosomal protein bL33 family.

The chain is Large ribosomal subunit protein bL33A from Staphylococcus aureus (strain COL).